We begin with the raw amino-acid sequence, 61 residues long: Small ribosomal subunit protein uS14 (61 aa).

The Zn(2+) site is built by Cys24, Cys27, Cys40, and Cys43.

It belongs to the universal ribosomal protein uS14 family. Zinc-binding uS14 subfamily. In terms of assembly, part of the 30S ribosomal subunit. Contacts proteins S3 and S10. Zn(2+) is required as a cofactor.

Its function is as follows. Binds 16S rRNA, required for the assembly of 30S particles and may also be responsible for determining the conformation of the 16S rRNA at the A site. The protein is Small ribosomal subunit protein uS14 of Heliobacterium modesticaldum (strain ATCC 51547 / Ice1).